We begin with the raw amino-acid sequence, 371 residues long: Cytochrome b (371 aa).

Helical transmembrane passes span 25–45, 69–90, 105–125, and 170–190; these read FGSMLLTCLMLQVLTGFFLAI, WIMQNTHAIGASLFFICIYIHI, WLSGVTLLMTLMATAFFGYVL, and FCALHFILPFIIISLSSIHII. Positions 75 and 89 each coordinate heme b. Heme b contacts are provided by histidine 174 and histidine 188. Histidine 193 is an a ubiquinone binding site. A run of 4 helical transmembrane segments spans residues 218–238, 280–300, 312–332, and 339–358; these read YKDFMTTTSMIILLPISLSVS, LGGTLALLMSILILTLPPFTH, LSQTLFWTLIATFVMITWTAT, and FITISQLTSIFYFSFFIMNP.

The protein belongs to the cytochrome b family. In terms of assembly, the cytochrome bc1 complex contains 3 respiratory subunits (MT-CYB, CYC1 and UQCRFS1), 2 core proteins (UQCRC1 and UQCRC2) and probably 6 low-molecular weight proteins. Heme b is required as a cofactor.

Its subcellular location is the mitochondrion inner membrane. Its function is as follows. Component of the ubiquinol-cytochrome c reductase complex (complex III or cytochrome b-c1 complex) that is part of the mitochondrial respiratory chain. The b-c1 complex mediates electron transfer from ubiquinol to cytochrome c. Contributes to the generation of a proton gradient across the mitochondrial membrane that is then used for ATP synthesis. The sequence is that of Cytochrome b (MT-CYB) from Micrurus tener microgalbineus (Spotted coral snake).